Consider the following 153-residue polypeptide: Superoxide dismutase [Cu-Zn] (153 aa).

Residues His45, His47, and His62 each coordinate Cu cation. A disulfide bridge links Cys56 with Cys145. Zn(2+)-binding residues include His62, His70, His79, and Asp82. His119 is a Cu cation binding site.

It belongs to the Cu-Zn superoxide dismutase family. Homodimer. Cu cation serves as cofactor. Requires Zn(2+) as cofactor.

Its subcellular location is the cytoplasm. It carries out the reaction 2 superoxide + 2 H(+) = H2O2 + O2. Its function is as follows. Destroys radicals which are normally produced within the cells and which are toxic to biological systems. The polypeptide is Superoxide dismutase [Cu-Zn] (Drosophila willistoni (Fruit fly)).